The chain runs to 429 residues: Endoglucanase A (429 aa).

The N-terminal stretch at Met1–Arg34 is a signal peptide. Over residues Ala46–Glu94 the composition is skewed to basic and acidic residues. Positions Ala46 to Pro100 are disordered. Catalysis depends on Glu249, which acts as the Proton donor. Glu334 functions as the Nucleophile in the catalytic mechanism.

This sequence belongs to the glycosyl hydrolase 5 (cellulase A) family.

The enzyme catalyses Endohydrolysis of (1-&gt;4)-beta-D-glucosidic linkages in cellulose, lichenin and cereal beta-D-glucans.. The polypeptide is Endoglucanase A (celA) (Butyrivibrio fibrisolvens).